A 346-amino-acid chain; its full sequence is Transcription factor 19 (346 aa).

An FHA domain is found at 31–88 (YRLGCRADLCDVALRPQQEPGFISEVHAELHAERRGDDWRVSLEDHSSQGTLVNNVRL). Ser78 is modified (phosphoserine). 2 disordered regions span residues 136–168 (PRSRGEEGETRAGFRPMLPSQGAPQRPLSTLSP) and 190–289 (LTFS…AAGG). A compositionally biased stretch (basic and acidic residues) spans 138-147 (SRGEEGETRA). The segment covering 190–208 (LTFSRSGSGPQNPPVSTTP) has biased composition (polar residues). Positions 250–260 (EPRKKLLRVEK) are enriched in basic and acidic residues. The PHD-type zinc-finger motif lies at 294–343 (AAPCCCLPQEETVAWVQCDGCDTWFHVACVGCSIQAAKEADFRCPGCRVG). Residues Cys297, Cys299, Cys311, Cys314, His319, Cys322, Cys337, and Cys340 each coordinate Zn(2+).

The protein resides in the nucleus. Potential transcription factor that may play a role in the regulation of genes involved in cell cycle G1/S transition. May bind to regulatory elements of genes, including the promoter of the transcription factor FOXO1. The polypeptide is Transcription factor 19 (TCF19) (Sus scrofa (Pig)).